The primary structure comprises 150 residues: Putative pre-16S rRNA nuclease (150 aa).

Belongs to the YqgF nuclease family.

It localises to the cytoplasm. Functionally, could be a nuclease involved in processing of the 5'-end of pre-16S rRNA. The protein is Putative pre-16S rRNA nuclease of Protochlamydia amoebophila (strain UWE25).